The chain runs to 343 residues: Leucine-rich repeat-containing protein 23 (343 aa).

Residues 1–30 (MSDEDDLEDSEPDQDDSEKEEDEKETEEGE) are compositionally biased toward acidic residues. Positions 1-47 (MSDEDDLEDSEPDQDDSEKEEDEKETEEGEDYRKEGEEFPEEWLPTP) are disordered. LRR repeat units lie at residues 92–113 (HLRY…NYLT), 114–134 (HLLW…NELP), 135–155 (YLQI…ISHP), 156–177 (RLET…DPEK), 180–200 (SLHT…INLP), 201–222 (KLKN…EDLS), 223–244 (NLTT…SREM), and 246–267 (SLQY…AKLR). The tract at residues 208 to 343 (AQNMLKKVEG…RDLEPEQSLI (136 aa)) is interaction with RSPH9. The region spanning 280 to 318 (NPCTDETSYRQEALVQMPYLERLDKEFYEEEERAEADVI) is the LRRCT domain. A coiled-coil region spans residues 307–329 (YEEEERAEADVIRQRLKEEKEQE). Residues 318 to 337 (IRQRLKEEKEQEPEPQRDLE) are compositionally biased toward basic and acidic residues. Residues 318-343 (IRQRLKEEKEQEPEPQRDLEPEQSLI) form a disordered region.

In terms of assembly, component of the axonemal radial spoke complex. Interacts with RSPH3. Interacts with RSPH9. As to expression, expressed in spermatozoa.

Its subcellular location is the cell projection. The protein localises to the cilium. It is found in the flagellum. It localises to the cytoplasm. The protein resides in the cytoskeleton. Its subcellular location is the flagellum axoneme. Functionally, essential for sperm motility and male fertility. Plays an important role in the proper assembly of the third radial spoke (RS3) head and the bridge structure between RS2 and RS3 in the sperm flagella. The polypeptide is Leucine-rich repeat-containing protein 23 (LRRC23) (Homo sapiens (Human)).